The sequence spans 269 residues: Transcription factor MYB7 (269 aa).

HTH myb-type domains follow at residues K9–L61 and R62–L116. 2 consecutive DNA-binding regions (H-T-H motif) follow at residues W37–L61 and W89–I112.

Interacts with SAD2. Expressed in anthers. Expressed in pollen grains and mature seeds. Expressed in roots and vasculature of leaves.

The protein localises to the nucleus. Its function is as follows. Transcription factor involved in the negative regulation of flavonol biosynthesis. Represses the early phenylpropanoid genes, phenylalanine ammonia-lyase (PAL), cinnamate 4-hydroxylase (C4H) and 4-coumarate-CoA ligase (4CL), as well as the flavonoid-specific genes, flavonoid 3'-hydroxylase (F3'H) and dihydroflavonol 4-reductase (DFR). Plays a role in seed germination inhibition. Negatively regulates the expression of the abscisic acid (ABA) signaling transcription factor ABI5 in seeds. The chain is Transcription factor MYB7 from Arabidopsis thaliana (Mouse-ear cress).